The primary structure comprises 133 residues: MLFGIRILVNTPSPLVTGLHHYNPSIHRDQGECANQWRKGPGSAHLAGLAGRCSLINTPSPLVTGLQRYNPSMDRAQGMCASLEEEAGLCKPLWAWWELQSHKHSQTSHHRAAGLQSQHAPGSGRVRITGGKV.

The segment at 107–133 (TSHHRAAGLQSQHAPGSGRVRITGGKV) is disordered.

This is an uncharacterized protein from Homo sapiens (Human).